The chain runs to 353 residues: Putative transport protein aq_740 (353 aa).

8 helical membrane-spanning segments follow: residues 4–24, 28–48, 60–80, 156–176, 209–229, 240–260, 268–288, and 309–329; these read LSLF…LYLL, FNPI…YGFI, FLVI…FAVI, VYTA…LFFI, VLAV…MGFI, LIWA…AAFV, LFTT…TFLI, and VALF…GVFL.

Belongs to the autoinducer-2 exporter (AI-2E) (TC 2.A.86) family.

The protein resides in the cell membrane. In Aquifex aeolicus (strain VF5), this protein is Putative transport protein aq_740.